The chain runs to 214 residues: Adenylate kinase (214 aa).

10–15 (GAGKGT) contacts ATP. An NMP region spans residues 30 to 59 (STGDMLRAAVKAGTPLGLEAKKVMDAGQLV). AMP-binding positions include Thr-31, Arg-36, 57 to 59 (QLV), 85 to 88 (GFPR), and Gln-92. The segment at 122–159 (GRRVHPGSGRVYHIVFNQPKVEGKDDVTGEDLAIRPDD) is LID. ATP contacts are provided by residues Arg-123 and 132-133 (VY). 2 residues coordinate AMP: Arg-156 and Arg-167. Gln-200 is an ATP binding site.

Belongs to the adenylate kinase family. In terms of assembly, monomer.

It is found in the cytoplasm. It carries out the reaction AMP + ATP = 2 ADP. It functions in the pathway purine metabolism; AMP biosynthesis via salvage pathway; AMP from ADP: step 1/1. In terms of biological role, catalyzes the reversible transfer of the terminal phosphate group between ATP and AMP. Plays an important role in cellular energy homeostasis and in adenine nucleotide metabolism. The chain is Adenylate kinase from Shewanella piezotolerans (strain WP3 / JCM 13877).